Here is a 471-residue protein sequence, read N- to C-terminus: Ribosome biogenesis protein YTM1 (471 aa).

A ubiquitin-like (UBL) domain region spans residues 10–92 (VTARFTTRDE…ETRLEVEYTR (83 aa)). WD repeat units follow at residues 119–158 (SRAGAWSGGSVQSGQERILSASYDGLVRVWNTSGDVLATS), 165–203 (GRITSLKSAKWLSDKKIVAAGMDNTVRVFKYDEDTRTIT), and 210–249 (SHRWGVEDVAVHGPSSRILSASSDNTISLFSSNAKENPVA). The tract at residues 245–274 (ENPVAPSSLLPNSTAASNKRQKLSKPDRTV) is disordered. Over residues 253-262 (LLPNSTAASN) the composition is skewed to polar residues. WD repeat units follow at residues 285–325 (GHSS…CVDT), 327–366 (TTGHSLLSLCAIPSRNLIATGTSARHITLIDPRVSATQIS), 372–412 (GHKN…TGGQ), and 436–471 (GHGEGVKVFGVRWDKDVGIVSGGEDKKIQINRALGS). The segment at 412–440 (QVGEGQQGESVHTIHRQGQSGPGKGHGEG) is disordered.

The protein belongs to the WD repeat WDR12/YTM1 family. Component of the NOP7 complex, composed of ERB1, NOP7 and YTM1. The complex is held together by ERB1, which interacts with NOP7 via its N-terminal domain and with YTM1 via a high-affinity interaction between the seven-bladed beta-propeller domains of the 2 proteins. The NOP7 complex associates with the 66S pre-ribosome. Interacts (via UBL domain) with MDN1 (via VWFA/MIDAS domain).

It localises to the nucleus. It is found in the nucleolus. The protein resides in the nucleoplasm. In terms of biological role, component of the NOP7 complex, which is required for maturation of the 25S and 5.8S ribosomal RNAs and formation of the 60S ribosome. This Phaeosphaeria nodorum (strain SN15 / ATCC MYA-4574 / FGSC 10173) (Glume blotch fungus) protein is Ribosome biogenesis protein YTM1.